The following is a 429-amino-acid chain: SET domain-containing protein 8 (429 aa).

Positions 17 to 232 (KQITIKKIRK…ENEEVTINYG (216 aa)) constitute an SET domain.

It belongs to the class V-like SAM-binding methyltransferase superfamily.

The protein resides in the cytoplasm. It is found in the nucleus. This Schizosaccharomyces pombe (strain 972 / ATCC 24843) (Fission yeast) protein is SET domain-containing protein 8 (set8).